Reading from the N-terminus, the 431-residue chain is Enolase (431 aa).

Position 167 (glutamine 167) interacts with (2R)-2-phosphoglycerate. The active-site Proton donor is the glutamate 209. 3 residues coordinate Mg(2+): aspartate 246, glutamate 290, and aspartate 317. 4 residues coordinate (2R)-2-phosphoglycerate: lysine 342, arginine 371, serine 372, and lysine 393. Catalysis depends on lysine 342, which acts as the Proton acceptor.

The protein belongs to the enolase family. In terms of assembly, component of the RNA degradosome, a multiprotein complex involved in RNA processing and mRNA degradation. Mg(2+) serves as cofactor.

Its subcellular location is the cytoplasm. The protein resides in the secreted. It is found in the cell surface. It catalyses the reaction (2R)-2-phosphoglycerate = phosphoenolpyruvate + H2O. It participates in carbohydrate degradation; glycolysis; pyruvate from D-glyceraldehyde 3-phosphate: step 4/5. Its function is as follows. Catalyzes the reversible conversion of 2-phosphoglycerate (2-PG) into phosphoenolpyruvate (PEP). It is essential for the degradation of carbohydrates via glycolysis. This Enterobacter sp. (strain 638) protein is Enolase.